The sequence spans 226 residues: Protein FMP52-1, mitochondrial (226 aa).

Residues 1–43 constitute a mitochondrion transit peptide; it reads MSAFVLGSTGLVGLQILKVLDSSTAFKKVSTVSRRLPSVTSGK.

The protein belongs to the FMP52 family.

It is found in the mitochondrion outer membrane. This is Protein FMP52-1, mitochondrial (FMP521) from Scheffersomyces stipitis (strain ATCC 58785 / CBS 6054 / NBRC 10063 / NRRL Y-11545) (Yeast).